The chain runs to 514 residues: 2-isopropylmalate synthase (514 aa).

The Pyruvate carboxyltransferase domain maps to 5-267 (VIIFDTTLRD…ETNIKHEEIH (263 aa)). Mn(2+)-binding residues include Asp-14, His-202, His-204, and Asn-238. The segment at 392-514 (KLNYLSVQSG…AEIKERIATV (123 aa)) is regulatory domain.

The protein belongs to the alpha-IPM synthase/homocitrate synthase family. LeuA type 1 subfamily. As to quaternary structure, homodimer. Requires Mn(2+) as cofactor.

It localises to the cytoplasm. The enzyme catalyses 3-methyl-2-oxobutanoate + acetyl-CoA + H2O = (2S)-2-isopropylmalate + CoA + H(+). It participates in amino-acid biosynthesis; L-leucine biosynthesis; L-leucine from 3-methyl-2-oxobutanoate: step 1/4. Its function is as follows. Catalyzes the condensation of the acetyl group of acetyl-CoA with 3-methyl-2-oxobutanoate (2-ketoisovalerate) to form 3-carboxy-3-hydroxy-4-methylpentanoate (2-isopropylmalate). The sequence is that of 2-isopropylmalate synthase from Photobacterium profundum (strain SS9).